We begin with the raw amino-acid sequence, 293 residues long: Single-pass membrane and coiled-coil domain-containing protein 2 (293 aa).

The stretch at 116-188 (KNLLEFLLKD…SAKLRMYQME (73 aa)) forms a coiled coil. Residues 234-254 (IFIMFYVLTVTGLLCYILFFG) traverse the membrane as a helical segment.

It localises to the membrane. The polypeptide is Single-pass membrane and coiled-coil domain-containing protein 2 (SMCO2) (Macaca fascicularis (Crab-eating macaque)).